A 293-amino-acid chain; its full sequence is ELMO domain-containing protein 2 (293 aa).

Residues Gln126–Leu282 enclose the ELMO domain.

Alveolar cells (morphologically type II cells) and alveolar macrophages (at protein level). Expressed in brain, colon, heart, kidney, liver, lung, muscle, placenta, small intestine, spleen, stomach and testis. In lung it is expressed in alveolar macrophages and alveolar walls.

Acts as a GTPase-activating protein (GAP) toward guanine nucleotide exchange factors like ARL2, ARL3, ARF1 and ARF6, but not for GTPases outside the Arf family. Regulates IFN-related antiviral responses. This Homo sapiens (Human) protein is ELMO domain-containing protein 2 (ELMOD2).